The following is a 355-amino-acid chain: Alanine racemase (355 aa).

Lysine 34 (proton acceptor; specific for D-alanine) is an active-site residue. N6-(pyridoxal phosphate)lysine is present on lysine 34. Arginine 133 is a binding site for substrate. Tyrosine 249 acts as the Proton acceptor; specific for L-alanine in catalysis. Methionine 297 is a binding site for substrate.

The protein belongs to the alanine racemase family. Pyridoxal 5'-phosphate is required as a cofactor.

The enzyme catalyses L-alanine = D-alanine. The protein operates within amino-acid biosynthesis; D-alanine biosynthesis; D-alanine from L-alanine: step 1/1. Functionally, catalyzes the interconversion of L-alanine and D-alanine. May also act on other amino acids. This Rickettsia africae (strain ESF-5) protein is Alanine racemase (alr).